We begin with the raw amino-acid sequence, 277 residues long: Probable xyloglucan endotransglucosylase/hydrolase protein 11 (277 aa).

A signal peptide spans 1-24; it reads MRGSDQKILLMVMVVVAVVAAAQG. A GH16 domain is found at 32 to 209; sequence VTWGNNYYQT…PKQMPYIAKF (178 aa). N-linked (GlcNAc...) asparagine glycosylation occurs at Asn50. The active-site Nucleophile is the Glu107. Xyloglucan contacts are provided by residues 123–125 and 133–135; these read NTN and GKD. Asn194 carries N-linked (GlcNAc...) asparagine glycosylation. Cystine bridges form between Cys217–Cys227 and Cys260–Cys273. Residue Arg265 coordinates xyloglucan.

This sequence belongs to the glycosyl hydrolase 16 family. XTH group 1 subfamily. In terms of processing, contains at least one intrachain disulfide bond essential for its enzymatic activity.

The protein localises to the secreted. The protein resides in the cell wall. It localises to the extracellular space. Its subcellular location is the apoplast. It catalyses the reaction breaks a beta-(1-&gt;4) bond in the backbone of a xyloglucan and transfers the xyloglucanyl segment on to O-4 of the non-reducing terminal glucose residue of an acceptor, which can be a xyloglucan or an oligosaccharide of xyloglucan.. Functionally, may catalyze xyloglucan endohydrolysis (XEH) and/or endotransglycosylation (XET). Cleaves and religates xyloglucan polymers, an essential constituent of the primary cell wall, and thereby participates in cell wall construction of growing tissues. The protein is Probable xyloglucan endotransglucosylase/hydrolase protein 11 (XTH11) of Arabidopsis thaliana (Mouse-ear cress).